The following is a 101-amino-acid chain: uncharacterized protein (101 aa).

3 helical membrane-spanning segments follow: residues 10–32, 45–67, and 77–99; these read FLPN…FFLY, LGIW…LPLI, and IAFT…ILSH.

Its subcellular location is the cell membrane. This is an uncharacterized protein from Bacillus subtilis (strain 168).